We begin with the raw amino-acid sequence, 204 residues long: Urease accessory protein UreG (204 aa).

Gly-11 to His-18 serves as a coordination point for GTP.

Belongs to the SIMIBI class G3E GTPase family. UreG subfamily. Homodimer. UreD, UreF and UreG form a complex that acts as a GTP-hydrolysis-dependent molecular chaperone, activating the urease apoprotein by helping to assemble the nickel containing metallocenter of UreC. The UreE protein probably delivers the nickel.

It localises to the cytoplasm. In terms of biological role, facilitates the functional incorporation of the urease nickel metallocenter. This process requires GTP hydrolysis, probably effectuated by UreG. The polypeptide is Urease accessory protein UreG (Staphylococcus xylosus).